Reading from the N-terminus, the 122-residue chain is LYR motif-containing protein 1 (122 aa).

This sequence belongs to the complex I LYR family.

In terms of biological role, may promote cell proliferation and inhibition of apoptosis of preadipocytes. The chain is LYR motif-containing protein 1 (Lyrm1) from Mus musculus (Mouse).